Reading from the N-terminus, the 386-residue chain is WD repeat-containing protein 89 (386 aa).

6 WD repeats span residues 21-65, 68-107, 112-156, 167-207, 213-253, and 318-357; these read KEPT…LLRE, GSPGLLSGVSFANSCDSVYSASTDGTVKCWDARGASEKPV, GYPS…QDLS, THSD…EEDA, NSVS…TDEP, and GHAATVRSFCWNVSEDSLLTGGEDAQLLLWKPGAMEKTFT.

This chain is WD repeat-containing protein 89 (Wdr89), found in Mus musculus (Mouse).